The following is a 930-amino-acid chain: MTTDFARHDLAQNSNSASEPDRVRVIREGVASYLPDIDPEETSEWLESFDTLLQRCGPSRARYLMLRLLERAGEQRVAIPALTSTDYVNTIPTELEPWFPGDEDVERRYRAWIRWNAAIMVHRAQRPGVGVGGHISTYASSAALYEVGFNHFFRGKSHPGGGDQVFIQGHASPGIYARAFLEGRLTAEQLDGFRQEHSHVGGGLPSYPHPRLMPDFWEFPTVSMGLGPLNAIYQARFNHYLHDRGIKDTSDQHVWCFLGDGEMDEPESRGLAHVGALEGLDNLTFVINCNLQRLDGPVRGNGKIIQELESFFRGAGWNVIKVVWGREWDALLHADRDGALVNLMNTTPDGDYQTYKANDGGYVRDHFFGRDPRTKALVENMSDQDIWNLKRGGHDYRKVYAAYRAAVDHKGQPTVILAKTIKGYALGKHFEGRNATHQMKKLTLEDLKEFRDTQRIPVSDAQLEENPYLPPYYHPGLNAPEIRYMLDRRRALGGFVPERRTKSKALTLPGRDIYAPLKKGSGHQEVATTMATVRTFKEVLRDKQIGPRIVPIIPDEARTFGMDSWFPSLKIYNRNGQLYTAVDADLMLAYKESEVGQILHEGINEAGSVGSFIAAGTSYATHNEPMIPIYIFYSMFGFQRTGDSFWAAADQMARGFVLGATAGRTTLTGEGLQHADGHSLLLAATNPAVVAYDPAFAYEIAYIVESGLARMCGENPENIFFYITVYNEPYVQPPEPENFDPEGVLRGIYRYHAATEQRTNKAQILASGVAMPAALRAAQMLAAEWDVAADVWSVTSWGELNRDGVAIETEKLRHPDRPAGVPYVTRALENARGPVIAVSDWMRAVPEQIRPWVPGTYLTLGTDGFGFSDTRPAARRYFNTDAESQVVAVLEALAGDGEIDPSVPVAAARQYRIDDVAAAPEQTTDPGPGA.

Residues 1-10 (MTTDFARHDL) are compositionally biased toward basic and acidic residues. A disordered region spans residues 1–21 (MTTDFARHDLAQNSNSASEPD). Lysine 375 is covalently cross-linked (Isoglutamyl lysine isopeptide (Lys-Gln) (interchain with Q-Cter in protein Pup)).

In terms of assembly, homodimer. Part of the PDH complex, consisting of multiple copies of AceE (E1), DlaT (E2) and Lpd (E3). Mg(2+) serves as cofactor. Thiamine diphosphate is required as a cofactor.

It catalyses the reaction N(6)-[(R)-lipoyl]-L-lysyl-[protein] + pyruvate + H(+) = N(6)-[(R)-S(8)-acetyldihydrolipoyl]-L-lysyl-[protein] + CO2. Functionally, component of the pyruvate dehydrogenase (PDH) complex, that catalyzes the overall conversion of pyruvate to acetyl-CoA and CO(2). AceE has reductase activity with pyruvate but does not react with 2-oxoglutarate. The polypeptide is Pyruvate dehydrogenase E1 component (aceE) (Mycobacterium tuberculosis (strain ATCC 25618 / H37Rv)).